Reading from the N-terminus, the 255-residue chain is Sulfur carrier protein FdhD (255 aa).

The active-site Cysteine persulfide intermediate is C103.

It belongs to the FdhD family.

The protein localises to the cytoplasm. Its function is as follows. Required for formate dehydrogenase (FDH) activity. Acts as a sulfur carrier protein that transfers sulfur from IscS to the molybdenum cofactor prior to its insertion into FDH. The protein is Sulfur carrier protein FdhD of Sulfurisphaera tokodaii (strain DSM 16993 / JCM 10545 / NBRC 100140 / 7) (Sulfolobus tokodaii).